A 188-amino-acid chain; its full sequence is dCTP deaminase, dUMP-forming (188 aa).

DCTP is bound by residues K101–R106, D119, T127–E129, Q148, Y162, and Q174. The active-site Proton donor/acceptor is the E129.

This sequence belongs to the dCTP deaminase family. Homotrimer.

The catalysed reaction is dCTP + 2 H2O = dUMP + NH4(+) + diphosphate. Its pathway is pyrimidine metabolism; dUMP biosynthesis; dUMP from dCTP: step 1/1. Bifunctional enzyme that catalyzes both the deamination of dCTP to dUTP and the hydrolysis of dUTP to dUMP without releasing the toxic dUTP intermediate. The chain is dCTP deaminase, dUMP-forming from Corynebacterium jeikeium (strain K411).